A 302-amino-acid polypeptide reads, in one-letter code: Protoheme IX farnesyltransferase (302 aa).

A run of 9 helical transmembrane segments spans residues 27–47 (VVAL…PGMV), 53–73 (LFGL…NHVI), 100–120 (LVFA…AVNV), 121–141 (LTAV…TVFL), 149–169 (IVWG…AVTG), 175–195 (PLLL…ALAI), 215–235 (VAFT…VSLV), 237–257 (FIIH…GIGF), and 273–293 (AMPT…LLLV).

The protein belongs to the UbiA prenyltransferase family. Protoheme IX farnesyltransferase subfamily.

It localises to the cell inner membrane. The enzyme catalyses heme b + (2E,6E)-farnesyl diphosphate + H2O = Fe(II)-heme o + diphosphate. Its pathway is porphyrin-containing compound metabolism; heme O biosynthesis; heme O from protoheme: step 1/1. In terms of biological role, converts heme B (protoheme IX) to heme O by substitution of the vinyl group on carbon 2 of heme B porphyrin ring with a hydroxyethyl farnesyl side group. The polypeptide is Protoheme IX farnesyltransferase (Thioalkalivibrio sulfidiphilus (strain HL-EbGR7)).